The primary structure comprises 296 residues: 4-hydroxy-tetrahydrodipicolinate synthase (296 aa).

Thr-50 is a binding site for pyruvate. Tyr-138 serves as the catalytic Proton donor/acceptor. The Schiff-base intermediate with substrate role is filled by Lys-166. Ile-208 serves as a coordination point for pyruvate.

Belongs to the DapA family. Homotetramer; dimer of dimers.

The protein resides in the cytoplasm. The catalysed reaction is L-aspartate 4-semialdehyde + pyruvate = (2S,4S)-4-hydroxy-2,3,4,5-tetrahydrodipicolinate + H2O + H(+). Its pathway is amino-acid biosynthesis; L-lysine biosynthesis via DAP pathway; (S)-tetrahydrodipicolinate from L-aspartate: step 3/4. In terms of biological role, catalyzes the condensation of (S)-aspartate-beta-semialdehyde [(S)-ASA] and pyruvate to 4-hydroxy-tetrahydrodipicolinate (HTPA). The polypeptide is 4-hydroxy-tetrahydrodipicolinate synthase (Thiobacillus denitrificans (strain ATCC 25259 / T1)).